A 103-amino-acid chain; its full sequence is Small ribosomal subunit protein uS10 (103 aa).

This sequence belongs to the universal ribosomal protein uS10 family. In terms of assembly, part of the 30S ribosomal subunit.

In terms of biological role, involved in the binding of tRNA to the ribosomes. This Pectobacterium atrosepticum (strain SCRI 1043 / ATCC BAA-672) (Erwinia carotovora subsp. atroseptica) protein is Small ribosomal subunit protein uS10.